Consider the following 367-residue polypeptide: GTP cyclohydrolase FolE2 (367 aa).

It belongs to the GTP cyclohydrolase IV family.

It catalyses the reaction GTP + H2O = 7,8-dihydroneopterin 3'-triphosphate + formate + H(+). Its pathway is cofactor biosynthesis; 7,8-dihydroneopterin triphosphate biosynthesis; 7,8-dihydroneopterin triphosphate from GTP: step 1/1. Functionally, converts GTP to 7,8-dihydroneopterin triphosphate. This chain is GTP cyclohydrolase FolE2, found in Ruegeria pomeroyi (strain ATCC 700808 / DSM 15171 / DSS-3) (Silicibacter pomeroyi).